The primary structure comprises 126 residues: MYYPLLSIALGSVLGAWLRWFLGLKLNPIYPQIPLGTVTVNLVGGFIIGFAMAYFAHSDLSPNYKLFVITGFCGALTTFSTFSIEIVTLLQSGKWGMAMLAISIHLIGSLIFTCLGLAAYYWVAGH.

The next 4 helical transmembrane spans lie at 4–24 (PLLSIALGSVLGAWLRWFLGL), 33–53 (IPLGTVTVNLVGGFIIGFAMA), 67–87 (FVITGFCGALTTFSTFSIEIV), and 97–117 (MAMLAISIHLIGSLIFTCLGL). Na(+) contacts are provided by glycine 74 and threonine 77.

Belongs to the fluoride channel Fluc/FEX (TC 1.A.43) family.

It localises to the cell inner membrane. It catalyses the reaction fluoride(in) = fluoride(out). With respect to regulation, na(+) is not transported, but it plays an essential structural role and its presence is essential for fluoride channel function. Fluoride-specific ion channel. Important for reducing fluoride concentration in the cell, thus reducing its toxicity. The protein is Fluoride-specific ion channel FluC of Acinetobacter baumannii (strain ATCC 17978 / DSM 105126 / CIP 53.77 / LMG 1025 / NCDC KC755 / 5377).